A 310-amino-acid chain; its full sequence is B3 domain-containing transcription factor NGA1 (310 aa).

The disordered stretch occupies residues 1 to 26; that stretch reads MMTDLSLTRDEDEEEAKPLAEEEGAR. Basic and acidic residues predominate over residues 16–26; the sequence is AKPLAEEEGAR. A DNA-binding region (TF-B3) is located at residues 35–141; it reads FDKVVTPSDV…RLFIDWRRRP (107 aa). Residues 251-268 are compositionally biased toward low complexity; sequence ESGMTNSTEEESSSSGGS. A disordered region spans residues 251–310; it reads ESGMTNSTEEESSSSGGSLPRGGGGGASSSSFFQLRLGSSSEDDHFTKKGKSSLSFDLDQ.

As to quaternary structure, interacts with BRX. Interacts with BZIP30.

The protein resides in the nucleus. In terms of biological role, regulates lateral organ growth. Functionally redundant with NGA2, NGA3 and NGA4. This chain is B3 domain-containing transcription factor NGA1 (NGA1), found in Arabidopsis thaliana (Mouse-ear cress).